The chain runs to 236 residues: Uridylate kinase (236 aa).

10 to 13 (KLSG) serves as a coordination point for ATP. Residue glycine 52 participates in UMP binding. Residues glycine 53 and arginine 57 each coordinate ATP. Residues aspartate 72 and 133–140 (TGNPFFTT) each bind UMP. The ATP site is built by threonine 160, tyrosine 166, and aspartate 169.

The protein belongs to the UMP kinase family. As to quaternary structure, homohexamer.

It localises to the cytoplasm. It carries out the reaction UMP + ATP = UDP + ADP. Its pathway is pyrimidine metabolism; CTP biosynthesis via de novo pathway; UDP from UMP (UMPK route): step 1/1. Its activity is regulated as follows. Inhibited by UTP. Its function is as follows. Catalyzes the reversible phosphorylation of UMP to UDP. The polypeptide is Uridylate kinase (Cupriavidus metallidurans (strain ATCC 43123 / DSM 2839 / NBRC 102507 / CH34) (Ralstonia metallidurans)).